Consider the following 70-residue polypeptide: Peptide Hp1035 (70 aa).

The N-terminal stretch at 1 to 23 (MKTQFVILLVALVLFQMFAQSEA) is a signal peptide. At F36 the chain carries Phenylalanine amide. Positions 40–70 (GLQDLDMDDLDQLFDGEISQADINFLNQLMR) are excised as a propeptide.

Belongs to the non-disulfide-bridged peptide (NDBP) superfamily. Short antimicrobial peptide (group 4) family. As to expression, expressed by the venom gland.

Its subcellular location is the secreted. The protein localises to the target cell membrane. Functionally, amphipathic peptide with antimicrobial activity. The chain is Peptide Hp1035 from Heterometrus petersii (Asian forest scorpion).